Consider the following 421-residue polypeptide: Osmoprotective compounds-binding protein GgtB (421 aa).

The first 18 residues, 1-18 (MKFFKITTLIISLIVLTS), serve as a signal peptide directing secretion. A lipid anchor (N-palmitoyl cysteine) is attached at Cys-19. Cys-19 is lipidated: S-diacylglycerol cysteine.

It belongs to the bacterial solute-binding protein 1 family. As to quaternary structure, the complex is composed of two ATP-binding proteins (GgtA), two transmembrane proteins (GgtC and GgtD) and a solute-binding protein (GgtB).

It is found in the cell membrane. Its function is as follows. Part of the ABC transporter complex GgtABCD involved in the uptake of the osmoprotective compounds glucosylglycerol (GG), sucrose and trehalose. Binds glucosylglycerol and exhibits a somewhat lower affinity towards sucrose and a substantially lower affinity towards trehalose. The chain is Osmoprotective compounds-binding protein GgtB from Synechocystis sp. (strain ATCC 27184 / PCC 6803 / Kazusa).